Reading from the N-terminus, the 144-residue chain is Large ribosomal subunit protein uL15 (144 aa).

A disordered region spans residues 1–49 (MRLNTLSPAAGSKSAPKRVGRGIGSGLGKTAGRGHKGQKSRSGGGVRVG). Positions 21 to 31 (RGIGSGLGKTA) are enriched in gly residues.

Belongs to the universal ribosomal protein uL15 family. In terms of assembly, part of the 50S ribosomal subunit.

Its function is as follows. Binds to the 23S rRNA. The polypeptide is Large ribosomal subunit protein uL15 (Shewanella denitrificans (strain OS217 / ATCC BAA-1090 / DSM 15013)).